The primary structure comprises 171 residues: Ribosome maturation factor RimM (171 aa).

One can recognise a PRC barrel domain in the interval 97-170 (EGEYYYHEII…LVTIHVMEGL (74 aa)).

It belongs to the RimM family. Binds ribosomal protein uS19.

It is found in the cytoplasm. Its function is as follows. An accessory protein needed during the final step in the assembly of 30S ribosomal subunit, possibly for assembly of the head region. Essential for efficient processing of 16S rRNA. May be needed both before and after RbfA during the maturation of 16S rRNA. It has affinity for free ribosomal 30S subunits but not for 70S ribosomes. The chain is Ribosome maturation factor RimM from Bacillus thuringiensis (strain Al Hakam).